We begin with the raw amino-acid sequence, 85 residues long: Large ribosomal subunit protein bL27 (85 aa).

A disordered region spans residues Met-1 to Leu-21.

Belongs to the bacterial ribosomal protein bL27 family.

This chain is Large ribosomal subunit protein bL27, found in Janthinobacterium sp. (strain Marseille) (Minibacterium massiliensis).